The primary structure comprises 504 residues: Cytochrome P450 2D9 (504 aa).

A Phosphoserine modification is found at S249. C446 provides a ligand contact to heme.

This sequence belongs to the cytochrome P450 family. Heme is required as a cofactor.

The protein localises to the endoplasmic reticulum membrane. It localises to the microsome membrane. It carries out the reaction an organic molecule + reduced [NADPH--hemoprotein reductase] + O2 = an alcohol + oxidized [NADPH--hemoprotein reductase] + H2O + H(+). In terms of biological role, cytochromes P450 are a group of heme-thiolate monooxygenases. In liver microsomes, this enzyme is involved in an NADPH-dependent electron transport pathway. It oxidizes a variety of structurally unrelated compounds, including steroids, fatty acids, and xenobiotics. This Mus musculus (Mouse) protein is Cytochrome P450 2D9 (Cyp2d9).